A 314-amino-acid polypeptide reads, in one-letter code: Probable phytol kinase 1, chloroplastic (314 aa).

The N-terminal 62 residues, M1–V62, are a transit peptide targeting the chloroplast. The next 7 membrane-spanning stretches (helical) occupy residues A72–V91, I111–T131, F135–L155, Y181–V201, I234–F254, L266–V286, and I294–C314.

This sequence belongs to the polyprenol kinase family.

The protein localises to the plastid. The protein resides in the chloroplast membrane. The enzyme catalyses phytol + CTP = phytyl phosphate + CDP + H(+). It functions in the pathway cofactor biosynthesis; tocopherol biosynthesis. Functionally, involved in the activation and reutilization of phytol from chlorophyll degradation in plant metabolism, including tocopherol biosynthesis. Catalyzes the conversion of phytol to phytol monophosphate (PMP). The chain is Probable phytol kinase 1, chloroplastic from Oryza sativa subsp. japonica (Rice).